The following is a 384-amino-acid chain: N-acetylneuraminate epimerase (384 aa).

The first 29 residues, 1–29 (MGMQMKNFKKMMTLMALCLSVAITTSGYA), serve as a signal peptide directing secretion. Kelch repeat units lie at residues 51-95 (VIYV…VFLN), 97-149 (KLYV…VKLN), 151-184 (TMVL…KVIY), 185-230 (NYFN…VMEN), 233-282 (LMLI…LAGA), 304-353 (QNYT…SYGD), and 355-384 (VFLI…LLIK). Glu239 functions as the Proton acceptor in the catalytic mechanism.

It belongs to the NanM family. In terms of assembly, homodimer.

It is found in the periplasm. The enzyme catalyses N-acetyl-alpha-neuraminate = N-acetyl-beta-neuraminate. In terms of biological role, converts alpha-N-acetylneuranimic acid (Neu5Ac) to the beta-anomer, accelerating the equilibrium between the alpha- and beta-anomers. Probably facilitates sialidase-negative bacteria to compete successfully for limited amounts of extracellular Neu5Ac, which is likely taken up in the beta-anomer. In addition, the rapid removal of sialic acid from solution might be advantageous to the bacterium to damp down host responses. This chain is N-acetylneuraminate epimerase, found in Salmonella typhi.